A 100-amino-acid polypeptide reads, in one-letter code: Testis development-related protein 1 (100 aa).

The disordered stretch occupies residues 73–100; it reads GLGSLGGQDSSGSLVQRASCELESPYEL.

In terms of tissue distribution, expressed in the testis but not in any other non-reproductive tissues (at protein level). Mainly located in spermatogenic cells in seminiferous tubules of adult testis.

The protein resides in the cytoplasm. This is Testis development-related protein 1 (TDRG1) from Homo sapiens (Human).